The primary structure comprises 343 residues: MIRAAIVGGTGYTGVELLRLLANHPNVEIVAITSRTEAGRPVSKLFPNLRGYLDICFTEPEPAQLAAECDVVFFATPHGVAMDMVPALLAQNTRVIDLSADFRLADPTIWEQWYGRPHAAPHLLAEAVYGLPEINREAIRQARLIACPGCYPTAVQLGFLPLLEHQLVDPSRLIADAKSGASGAGRKAALGTLLCEAGENFKAYSVSGHRHLPEIIQGLQWASRSSVDLTFVPHLIPMIRGIHATLYAQLEHEVDLQELYEQRYAPEPFVDVLPPGSHPETRSVRGNNMCRLAIHRPSAGNTVIVLSVTDNLIKGASGQAIQNMNLMFGQEETRGLMHIAVIP.

Residue Cys-150 is part of the active site.

It belongs to the NAGSA dehydrogenase family. Type 1 subfamily.

The protein localises to the cytoplasm. The enzyme catalyses N-acetyl-L-glutamate 5-semialdehyde + phosphate + NADP(+) = N-acetyl-L-glutamyl 5-phosphate + NADPH + H(+). Its pathway is amino-acid biosynthesis; L-arginine biosynthesis; N(2)-acetyl-L-ornithine from L-glutamate: step 3/4. Catalyzes the NADPH-dependent reduction of N-acetyl-5-glutamyl phosphate to yield N-acetyl-L-glutamate 5-semialdehyde. This Nitrosococcus oceani (strain ATCC 19707 / BCRC 17464 / JCM 30415 / NCIMB 11848 / C-107) protein is N-acetyl-gamma-glutamyl-phosphate reductase.